The following is a 248-amino-acid chain: Coproheme decarboxylase (248 aa).

Fe-coproporphyrin III contacts are provided by residues Arg130, 144–148 (YPMDK), His171, Gln184, and Ser222. Tyr144 is an active-site residue.

The protein belongs to the ChdC family. Type 1 subfamily. Fe-coproporphyrin III serves as cofactor.

It carries out the reaction Fe-coproporphyrin III + 2 H2O2 + 2 H(+) = heme b + 2 CO2 + 4 H2O. It catalyses the reaction Fe-coproporphyrin III + H2O2 + H(+) = harderoheme III + CO2 + 2 H2O. The enzyme catalyses harderoheme III + H2O2 + H(+) = heme b + CO2 + 2 H2O. The protein operates within porphyrin-containing compound metabolism; protoheme biosynthesis. Functionally, involved in coproporphyrin-dependent heme b biosynthesis. Catalyzes the decarboxylation of Fe-coproporphyrin III (coproheme) to heme b (protoheme IX), the last step of the pathway. The reaction occurs in a stepwise manner with a three-propionate intermediate. The sequence is that of Coproheme decarboxylase from Geobacillus sp. (strain WCH70).